The chain runs to 355 residues: UDP-3-O-acylglucosamine N-acyltransferase (355 aa).

Histidine 246 serves as the catalytic Proton acceptor.

It belongs to the transferase hexapeptide repeat family. LpxD subfamily. In terms of assembly, homotrimer.

The enzyme catalyses a UDP-3-O-[(3R)-3-hydroxyacyl]-alpha-D-glucosamine + a (3R)-hydroxyacyl-[ACP] = a UDP-2-N,3-O-bis[(3R)-3-hydroxyacyl]-alpha-D-glucosamine + holo-[ACP] + H(+). It participates in bacterial outer membrane biogenesis; LPS lipid A biosynthesis. In terms of biological role, catalyzes the N-acylation of UDP-3-O-acylglucosamine using 3-hydroxyacyl-ACP as the acyl donor. Is involved in the biosynthesis of lipid A, a phosphorylated glycolipid that anchors the lipopolysaccharide to the outer membrane of the cell. The protein is UDP-3-O-acylglucosamine N-acyltransferase of Polaromonas naphthalenivorans (strain CJ2).